A 399-amino-acid chain; its full sequence is Serine/threonine-protein kinase PknL (399 aa).

Over Met1 to Arg368 the chain is Cytoplasmic. In terms of domain architecture, Protein kinase spans Tyr19–Ile278. ATP is bound by residues Ile25 to Val33 and Lys48. Asp142 acts as the Proton acceptor in catalysis. The disordered stretch occupies residues Gly312 to Pro346. Residues Met369–Trp389 form a helical membrane-spanning segment. Residues Thr390–Leu399 are Extracellular-facing.

This sequence belongs to the protein kinase superfamily. Ser/Thr protein kinase family. Post-translationally, autophosphorylated.

The protein localises to the cell membrane. The enzyme catalyses L-seryl-[protein] + ATP = O-phospho-L-seryl-[protein] + ADP + H(+). The catalysed reaction is L-threonyl-[protein] + ATP = O-phospho-L-threonyl-[protein] + ADP + H(+). This chain is Serine/threonine-protein kinase PknL (pknL), found in Mycobacterium bovis (strain ATCC BAA-935 / AF2122/97).